The following is a 439-amino-acid chain: Ornithine aminotransferase, mitochondrial (439 aa).

The transit peptide at 1 to 25 (MFSKLAHLQRFAVLSRGVHSSVASA) directs the protein to the mitochondrion; in hepatic form. The N-terminal 35 residues, 1-35 (MFSKLAHLQRFAVLSRGVHSSVASATSVATKKTVQ), are a transit peptide targeting the mitochondrion; in renal form. N6-acetyllysine occurs at positions 49 and 66. Lys-102 is subject to N6-succinyllysine. Lys-107 bears the N6-acetyllysine; alternate mark. Residue Lys-107 is modified to N6-succinyllysine; alternate. Position 292 is an N6-(pyridoxal phosphate)lysine (Lys-292). Lys-362 carries the N6-acetyllysine; alternate modification. Lys-362 bears the N6-succinyllysine; alternate mark. Lys-386 and Lys-392 each carry N6-acetyllysine. Lys-405 bears the N6-acetyllysine; alternate mark. Lys-405 is modified (N6-succinyllysine; alternate). Position 421 is an N6-acetyllysine (Lys-421).

The protein belongs to the class-III pyridoxal-phosphate-dependent aminotransferase family. In terms of assembly, homohexamer. It depends on pyridoxal 5'-phosphate as a cofactor.

Its subcellular location is the mitochondrion matrix. It carries out the reaction L-ornithine + 2-oxoglutarate = L-glutamate 5-semialdehyde + L-glutamate. The protein operates within amino-acid biosynthesis; L-proline biosynthesis; L-glutamate 5-semialdehyde from L-ornithine: step 1/1. Its function is as follows. Catalyzes the reversible interconversion of L-ornithine and 2-oxoglutarate to L-glutamate semialdehyde and L-glutamate. This chain is Ornithine aminotransferase, mitochondrial (OAT), found in Homo sapiens (Human).